Here is a 374-residue protein sequence, read N- to C-terminus: Lactoyl-CoA dehydratase subunit beta (374 aa).

The protein belongs to the FldB/FldC dehydratase alpha/beta subunit family. As to quaternary structure, heterodimer of an alpha (LcdA) and a beta (LcdB) subunit. It depends on [4Fe-4S] cluster as a cofactor. FMN serves as cofactor. Riboflavin is required as a cofactor. Requires Mg(2+) as cofactor.

The catalysed reaction is (R)-lactoyl-CoA = acryloyl-CoA + H2O. It catalyses the reaction (2R)-hydroxybutanoyl-CoA = (2E)-butenoyl-CoA + H2O. Its activity is regulated as follows. Activated by the LcdC protein. Functionally, involved in the acrylate pathway for the conversion of D-lactic acid to propionic acid. Catalyzes the reversible dehydration of Lactoyl-CoA and 2-hydroxybutyroyl-CoA to acryloyl-CoA and crotonyl-CoA, respectively. The sequence is that of Lactoyl-CoA dehydratase subunit beta (lcdB) from Anaerotignum propionicum (Clostridium propionicum).